A 201-amino-acid chain; its full sequence is 3-isopropylmalate dehydratase small subunit (201 aa).

The protein belongs to the LeuD family. LeuD type 1 subfamily. In terms of assembly, heterodimer of LeuC and LeuD.

It carries out the reaction (2R,3S)-3-isopropylmalate = (2S)-2-isopropylmalate. Its pathway is amino-acid biosynthesis; L-leucine biosynthesis; L-leucine from 3-methyl-2-oxobutanoate: step 2/4. Functionally, catalyzes the isomerization between 2-isopropylmalate and 3-isopropylmalate, via the formation of 2-isopropylmaleate. The protein is 3-isopropylmalate dehydratase small subunit of Nitrobacter winogradskyi (strain ATCC 25391 / DSM 10237 / CIP 104748 / NCIMB 11846 / Nb-255).